The primary structure comprises 478 residues: Transposase for insertion sequence element IS231E (478 aa).

This sequence belongs to the transposase 11 family.

Its function is as follows. Involved in the transposition of the insertion sequence. This Bacillus thuringiensis subsp. finitimus protein is Transposase for insertion sequence element IS231E.